Consider the following 126-residue polypeptide: Fluoride-specific ion channel FluC (126 aa).

4 helical membrane-spanning segments follow: residues 4–24 (PLLS…FLGL), 33–53 (IPLG…FAMA), 67–87 (FVIT…IEIV), and 97–117 (MAML…CLGL). Na(+) contacts are provided by glycine 74 and threonine 77.

The protein belongs to the fluoride channel Fluc/FEX (TC 1.A.43) family.

It localises to the cell inner membrane. It catalyses the reaction fluoride(in) = fluoride(out). Na(+) is not transported, but it plays an essential structural role and its presence is essential for fluoride channel function. In terms of biological role, fluoride-specific ion channel. Important for reducing fluoride concentration in the cell, thus reducing its toxicity. The chain is Fluoride-specific ion channel FluC from Acinetobacter baumannii (strain SDF).